We begin with the raw amino-acid sequence, 541 residues long: Chaperonin GroEL 2 (541 aa).

Residues 29 to 32 (TLGP), 86 to 90 (DGTTT), Gly413, 476 to 478 (NAA), and Asp492 contribute to the ATP site.

Belongs to the chaperonin (HSP60) family. As to quaternary structure, forms a cylinder of 14 subunits composed of two heptameric rings stacked back-to-back. Interacts with the co-chaperonin GroES.

The protein localises to the secreted. Its subcellular location is the capsule. It localises to the cell surface. It is found in the cell wall. It catalyses the reaction ATP + H2O + a folded polypeptide = ADP + phosphate + an unfolded polypeptide.. Functionally, together with its co-chaperonin GroES, plays an essential role in assisting protein folding. The GroEL-GroES system forms a nano-cage that allows encapsulation of the non-native substrate proteins and provides a physical environment optimized to promote and accelerate protein folding. This Mycobacterium ulcerans (strain Agy99) protein is Chaperonin GroEL 2.